The sequence spans 276 residues: NH(3)-dependent NAD(+) synthetase (276 aa).

47 to 54 (GISGGQDS) is an ATP binding site. Mg(2+) is bound at residue Asp-53. Residue Arg-141 participates in deamido-NAD(+) binding. Thr-161 contacts ATP. Glu-166 serves as a coordination point for Mg(2+). Residues Lys-174 and Asp-181 each contribute to the deamido-NAD(+) site. Residues Lys-190 and Thr-212 each coordinate ATP. 261 to 262 (HK) lines the deamido-NAD(+) pocket.

Belongs to the NAD synthetase family. Homodimer.

It carries out the reaction deamido-NAD(+) + NH4(+) + ATP = AMP + diphosphate + NAD(+) + H(+). It participates in cofactor biosynthesis; NAD(+) biosynthesis; NAD(+) from deamido-NAD(+) (ammonia route): step 1/1. Its function is as follows. Catalyzes the ATP-dependent amidation of deamido-NAD to form NAD. Uses ammonia as a nitrogen source. The sequence is that of NH(3)-dependent NAD(+) synthetase from Levilactobacillus brevis (strain ATCC 367 / BCRC 12310 / CIP 105137 / JCM 1170 / LMG 11437 / NCIMB 947 / NCTC 947) (Lactobacillus brevis).